The sequence spans 836 residues: Zinc fingers and homeoboxes protein 2 (836 aa).

The disordered stretch occupies residues 24–58 (LEEADRAKDKGLGVPPSDVSKERWAAEPEPSSKES). The interval 27–77 (ADRAKDKGLGVPPSDVSKERWAAEPEPSSKESEVVEVRSVGESQSKKLQGG) is interaction with EFNB1. Positions 42–58 (VSKERWAAEPEPSSKES) are enriched in basic and acidic residues. 2 consecutive C2H2-type zinc fingers follow at residues 78–101 (YECK…DMQH) and 110–133 (YVCA…SKFH). The segment at 168 to 210 (SAPGSSDNDPGVSVGKTATVKTGKQKADAKKVPKKPDEAAPDN) is disordered. Over residues 192–210 (QKADAKKVPKKPDEAAPDN) the composition is skewed to basic and acidic residues. Residues 195–358 (DAKKVPKKPD…PAQLTPTKVS (164 aa)) are required for homodimerization. 4 consecutive DNA-binding regions (homeobox) follow at residues 263–324 (NTTK…WSPE), 439–501 (TPAS…IVHI), 530–591 (AQKF…EQAV), and 628–690 (SPSS…TLSW). Residues 263–446 (NTTKYNSALD…PLTPASDRKK (184 aa)) form a required for repressor activity region. Positions 263-497 (NTTKYNSALD…SDHRYRCQRG (235 aa)) are required for interaction with NFYA. The tract at residues 317 to 446 (HGISWSPEEV…PLTPASDRKK (130 aa)) is required for nuclear localization. The interval 404 to 442 (GQKRPLVTPQAAPEPKRPHIAQVPEPPPKVANTPLTPAS) is disordered. Lys455 participates in a covalent cross-link: Glycyl lysine isopeptide (Lys-Gly) (interchain with G-Cter in SUMO2). Basic and acidic residues-rich tracts occupy residues 700–709 (SDDHGHDVAS) and 730–746 (YAKD…EKLV). The disordered stretch occupies residues 700–836 (SDDHGHDVAS…DSTPAEAGQA (137 aa)). Phosphoserine is present on residues Ser824 and Ser826.

The protein belongs to the ZHX family. In terms of assembly, homodimer (via homeobox domain 1). Heterodimer with ZHX1 (via homeobox domain 1). Heterodimer with ZHX3 (via homeobox domain 1). Heterodimerization with ZHX1 is not necessary for repressor activity. Interacts (via homeobox domain) with NFYA (via N-terminus). Interacts with EFNB1 intracellular domain peptide; the interaction enhances ZHX2 transcriptional repression activity.

It localises to the nucleus. Its function is as follows. Acts as a transcriptional repressor. Represses the promoter activity of the CDC25C gene stimulated by NFYA. May play a role in retinal development where it regulates the composition of bipolar cell populations, by promoting differentiation of bipolar OFF-type cells. In the brain, may promote maintenance and suppress differentiation of neural progenitor cells in the developing cortex. The polypeptide is Zinc fingers and homeoboxes protein 2 (Zhx2) (Rattus norvegicus (Rat)).